The chain runs to 277 residues: Undecaprenyl-diphosphatase (277 aa).

8 helical membrane passes run 1–21 (MDII…FLPV), 38–58 (SSLA…LWFF), 93–113 (LVWY…LFES), 118–138 (LFAG…TILY), 168–188 (AILP…VIGL), 191–211 (EFAA…AFVV), 222–242 (FNAL…YLAI), and 256–276 (IFAY…ITHL).

This sequence belongs to the UppP family.

Its subcellular location is the cell membrane. The enzyme catalyses di-trans,octa-cis-undecaprenyl diphosphate + H2O = di-trans,octa-cis-undecaprenyl phosphate + phosphate + H(+). Catalyzes the dephosphorylation of undecaprenyl diphosphate (UPP). In Methanobrevibacter smithii (strain ATCC 35061 / DSM 861 / OCM 144 / PS), this protein is Undecaprenyl-diphosphatase.